A 117-amino-acid polypeptide reads, in one-letter code: Photosystem II reaction center Psb28 protein (117 aa).

This sequence belongs to the Psb28 family. Part of the photosystem II complex.

The protein localises to the cellular thylakoid membrane. The chain is Photosystem II reaction center Psb28 protein from Prochlorococcus marinus (strain MIT 9211).